A 416-amino-acid polypeptide reads, in one-letter code: Serine hydroxymethyltransferase (416 aa).

Residues L118 and 122-124 (GHL) contribute to the (6S)-5,6,7,8-tetrahydrofolate site. N6-(pyridoxal phosphate)lysine is present on K226. Residues E242 and 350-352 (SPF) contribute to the (6S)-5,6,7,8-tetrahydrofolate site.

Belongs to the SHMT family. As to quaternary structure, homodimer. It depends on pyridoxal 5'-phosphate as a cofactor.

The protein resides in the cytoplasm. The catalysed reaction is (6R)-5,10-methylene-5,6,7,8-tetrahydrofolate + glycine + H2O = (6S)-5,6,7,8-tetrahydrofolate + L-serine. Its pathway is one-carbon metabolism; tetrahydrofolate interconversion. It functions in the pathway amino-acid biosynthesis; glycine biosynthesis; glycine from L-serine: step 1/1. Its function is as follows. Catalyzes the reversible interconversion of serine and glycine with tetrahydrofolate (THF) serving as the one-carbon carrier. This reaction serves as the major source of one-carbon groups required for the biosynthesis of purines, thymidylate, methionine, and other important biomolecules. Also exhibits THF-independent aldolase activity toward beta-hydroxyamino acids, producing glycine and aldehydes, via a retro-aldol mechanism. The polypeptide is Serine hydroxymethyltransferase (Helicobacter pylori (strain ATCC 700392 / 26695) (Campylobacter pylori)).